The sequence spans 424 residues: Histidine--tRNA ligase (424 aa).

Belongs to the class-II aminoacyl-tRNA synthetase family. As to quaternary structure, homodimer.

The protein resides in the cytoplasm. The catalysed reaction is tRNA(His) + L-histidine + ATP = L-histidyl-tRNA(His) + AMP + diphosphate + H(+). This is Histidine--tRNA ligase from Salmonella paratyphi B (strain ATCC BAA-1250 / SPB7).